The sequence spans 492 residues: UPF0236 protein TTE1650/TTE2708 (492 aa).

This sequence belongs to the UPF0236 family.

This chain is UPF0236 protein TTE1650/TTE2708, found in Caldanaerobacter subterraneus subsp. tengcongensis (strain DSM 15242 / JCM 11007 / NBRC 100824 / MB4) (Thermoanaerobacter tengcongensis).